Reading from the N-terminus, the 399-residue chain is MSIISTRLNSIKPSPTLAVVKKTLELKKAGVNIIALGAGEPDFDTPDNIKEVAITSIKDGFTKYTNVDGIPLLKQAIKNKFKRENNIDYELDEIIVSTGGKQVIYNLFMASLDKGDEVIIPVPYWVSYPDMVALSTGTPVFVNCGIENNFKLSVEALEHSITDKTKWLIINSPSNPTGAGYNCKELENIAKTLRKYPNVNIMSDDIYEHITFDDFKFYTLAQIAPDLKERIFTVNGVSKAYSMTGWRIGYGAGSKALIKAMTIIQSQSTSNPCSISQMAAIEALNGTQDYIKSNALNFQKKRDLALSILEEVTYFECYKPEGAFYLFVKCDKIFGTKTKSGRIIANSNNFSEYLLEEAKVAVVPGIAFGLDGYFRISYATSMQELEEACIRIKHACNAL.

The L-aspartate site is built by G39, W125, and N175. Position 239 is an N6-(pyridoxal phosphate)lysine (K239). R375 is a binding site for L-aspartate.

This sequence belongs to the class-I pyridoxal-phosphate-dependent aminotransferase family. As to quaternary structure, homodimer. Pyridoxal 5'-phosphate serves as cofactor.

It is found in the cytoplasm. It carries out the reaction L-aspartate + 2-oxoglutarate = oxaloacetate + L-glutamate. It catalyses the reaction L-arogenate + 2-oxoglutarate = prephenate + L-glutamate. Catalyzes the reversible conversion of aspartate and 2-oxoglutarate to glutamate and oxaloacetate. Can also transaminate prephenate in the presence of glutamate. This chain is Probable aspartate/prephenate aminotransferase (aatA), found in Rickettsia prowazekii (strain Madrid E).